A 303-amino-acid polypeptide reads, in one-letter code: UPF0282 protein MM_2966 (303 aa).

It belongs to the UPF0282 family.

The sequence is that of UPF0282 protein MM_2966 from Methanosarcina mazei (strain ATCC BAA-159 / DSM 3647 / Goe1 / Go1 / JCM 11833 / OCM 88) (Methanosarcina frisia).